A 140-amino-acid polypeptide reads, in one-letter code: Nucleoside diphosphate kinase (140 aa).

Residues Lys-11, Phe-59, Arg-87, Thr-93, Arg-104, and Asn-114 each contribute to the ATP site. His-117 (pros-phosphohistidine intermediate) is an active-site residue.

The protein belongs to the NDK family. Homotetramer. Mg(2+) serves as cofactor.

The protein localises to the cytoplasm. The catalysed reaction is a 2'-deoxyribonucleoside 5'-diphosphate + ATP = a 2'-deoxyribonucleoside 5'-triphosphate + ADP. It carries out the reaction a ribonucleoside 5'-diphosphate + ATP = a ribonucleoside 5'-triphosphate + ADP. Major role in the synthesis of nucleoside triphosphates other than ATP. The ATP gamma phosphate is transferred to the NDP beta phosphate via a ping-pong mechanism, using a phosphorylated active-site intermediate. The sequence is that of Nucleoside diphosphate kinase from Paracoccus denitrificans (strain Pd 1222).